Consider the following 117-residue polypeptide: Large ribosomal subunit protein uL18 (117 aa).

It belongs to the universal ribosomal protein uL18 family. Part of the 50S ribosomal subunit; part of the 5S rRNA/L5/L18/L25 subcomplex. Contacts the 5S and 23S rRNAs.

In terms of biological role, this is one of the proteins that bind and probably mediate the attachment of the 5S RNA into the large ribosomal subunit, where it forms part of the central protuberance. This chain is Large ribosomal subunit protein uL18, found in Chromobacterium violaceum (strain ATCC 12472 / DSM 30191 / JCM 1249 / CCUG 213 / NBRC 12614 / NCIMB 9131 / NCTC 9757 / MK).